We begin with the raw amino-acid sequence, 498 residues long: Nucleoprotein (498 aa).

A Unconventional nuclear localization signal motif is present at residues 1 to 18; sequence MASQGTKRSYEQMETDGE. Residues 1–21 form a disordered region; the sequence is MASQGTKRSYEQMETDGERQN. Positions 8-21 are enriched in basic and acidic residues; it reads RSYEQMETDGERQN. Residues 198–216 carry the Bipartite nuclear localization signal motif; the sequence is KRGINDRNFWRGENGRKTR.

It belongs to the influenza viruses nucleoprotein family. In terms of assembly, homomultimerizes to form the nucleocapsid. May bind host exportin-1/XPO1. Binds to viral genomic RNA. Protein-RNA contacts are mediated by a combination of electrostatic interactions between positively charged residues and the phosphate backbone and planar interactions between aromatic side chains and bases. Late in virus-infected cells, may be cleaved from a 56-kDa protein to a 53-kDa protein by a cellular caspase. This cleavage might be a marker for the onset of apoptosis in infected cells or have a specific function in virus host interaction.

It is found in the virion. It localises to the host nucleus. In terms of biological role, encapsidates the negative strand viral RNA, protecting it from nucleases. The encapsidated genomic RNA is termed the ribonucleoprotein (RNP) and serves as template for transcription and replication. The RNP needs to be localized in the host nucleus to start an infectious cycle, but is too large to diffuse through the nuclear pore complex. NP comprises at least 2 nuclear localization signals that are responsible for the active RNP import into the nucleus through cellular importin alpha/beta pathway. Later in the infection, nclear export of RNPs are mediated through viral proteins NEP interacting with M1 which binds nucleoproteins. It is possible that nucleoprotein binds directly host exportin-1/XPO1 and plays an active role in RNPs nuclear export. M1 interaction with RNP seems to hide nucleoprotein's nuclear localization signals. Soon after a virion infects a new cell, M1 dissociates from the RNP under acidification of the virion driven by M2 protein. Dissociation of M1 from RNP unmasks nucleoprotein's nuclear localization signals, targeting the RNP to the nucleus. This chain is Nucleoprotein, found in Influenza A virus (strain A/Beijing/39/1975 H3N2).